A 214-amino-acid chain; its full sequence is Probable nicotinate-nucleotide adenylyltransferase (214 aa).

It belongs to the NadD family.

It catalyses the reaction nicotinate beta-D-ribonucleotide + ATP + H(+) = deamido-NAD(+) + diphosphate. It functions in the pathway cofactor biosynthesis; NAD(+) biosynthesis; deamido-NAD(+) from nicotinate D-ribonucleotide: step 1/1. Functionally, catalyzes the reversible adenylation of nicotinate mononucleotide (NaMN) to nicotinic acid adenine dinucleotide (NaAD). The protein is Probable nicotinate-nucleotide adenylyltransferase of Buchnera aphidicola subsp. Acyrthosiphon pisum (strain Tuc7).